The following is a 248-amino-acid chain: 1-(5-phosphoribosyl)-5-[(5-phosphoribosylamino)methylideneamino] imidazole-4-carboxamide isomerase (248 aa).

Aspartate 7 (proton acceptor) is an active-site residue. The active-site Proton donor is the aspartate 129.

It belongs to the HisA/HisF family.

Its subcellular location is the cytoplasm. It catalyses the reaction 1-(5-phospho-beta-D-ribosyl)-5-[(5-phospho-beta-D-ribosylamino)methylideneamino]imidazole-4-carboxamide = 5-[(5-phospho-1-deoxy-D-ribulos-1-ylimino)methylamino]-1-(5-phospho-beta-D-ribosyl)imidazole-4-carboxamide. It participates in amino-acid biosynthesis; L-histidine biosynthesis; L-histidine from 5-phospho-alpha-D-ribose 1-diphosphate: step 4/9. The protein is 1-(5-phosphoribosyl)-5-[(5-phosphoribosylamino)methylideneamino] imidazole-4-carboxamide isomerase of Aeromonas salmonicida (strain A449).